Here is a 449-residue protein sequence, read N- to C-terminus: Na(+)-translocating NADH-quinone reductase subunit A (449 aa).

Belongs to the NqrA family. As to quaternary structure, composed of six subunits; NqrA, NqrB, NqrC, NqrD, NqrE and NqrF.

It carries out the reaction a ubiquinone + n Na(+)(in) + NADH + H(+) = a ubiquinol + n Na(+)(out) + NAD(+). Its function is as follows. NQR complex catalyzes the reduction of ubiquinone-1 to ubiquinol by two successive reactions, coupled with the transport of Na(+) ions from the cytoplasm to the periplasm. NqrA to NqrE are probably involved in the second step, the conversion of ubisemiquinone to ubiquinol. The polypeptide is Na(+)-translocating NADH-quinone reductase subunit A (Actinobacillus pleuropneumoniae serotype 5b (strain L20)).